Consider the following 312-residue polypeptide: MKVAVLGAAGGIGQALALLLKTQLPSGSELSLYDIAPVTPGVAVDLSHIPTAVKIKGFSGEDATPALEGADVVLISAGVARKPGMDRSDLFNVNAGIVKNLVQQVAKTCPKACIGIITNPVNTTVAIAAEVLKKAGVYDKNKLFGVTTLDIIRSNTFVAELKGKQPGEVEVPVIGGHSGVTILPLLSQVPGVSFTEQEVADLTKRIQNAGTEVVEAKAGGGSATLSMGQAAARFGLSLVRALQGEQGVIECAYVEGDGQYARFFSQPLLLGKNGVEERKSIGTLSAFEQNALEGMLDTLKKDIALGEEFVNK.

Residues 7-13 and D34 each bind NAD(+); that span reads GAAGGIG. Positions 81 and 87 each coordinate substrate. NAD(+) contacts are provided by residues N94 and 117–119; that span reads ITN. Residues N119 and R153 each coordinate substrate. Residue H177 is the Proton acceptor of the active site. Position 227 (M227) interacts with NAD(+).

Belongs to the LDH/MDH superfamily. MDH type 1 family. In terms of assembly, homodimer.

The enzyme catalyses (S)-malate + NAD(+) = oxaloacetate + NADH + H(+). Its function is as follows. Catalyzes the reversible oxidation of malate to oxaloacetate. In Escherichia coli O6:K15:H31 (strain 536 / UPEC), this protein is Malate dehydrogenase.